The sequence spans 426 residues: L-cysteine:1D-myo-inositol 2-amino-2-deoxy-alpha-D-glucopyranoside ligase (426 aa).

C43 provides a ligand contact to Zn(2+). Residues 43-46, S58, and 81-83 contribute to the L-cysteinyl-5'-AMP site; these read CGIT and NVT. The 'HIGH' region motif lies at 45 to 55; sequence ITPYDATHMGH. The 'ERGGDP' region signature appears at 200 to 205; sequence ERGGDP. Residue W241 coordinates L-cysteinyl-5'-AMP. C245 serves as a coordination point for Zn(2+). 263 to 265 contributes to the L-cysteinyl-5'-AMP binding site; it reads GSD. Zn(2+) is bound at residue H270. L-cysteinyl-5'-AMP is bound at residue V296. The 'KMSKS' region motif lies at 302–306; it reads KMSKS.

It belongs to the class-I aminoacyl-tRNA synthetase family. MshC subfamily. In terms of assembly, monomer. Zn(2+) serves as cofactor.

The enzyme catalyses 1D-myo-inositol 2-amino-2-deoxy-alpha-D-glucopyranoside + L-cysteine + ATP = 1D-myo-inositol 2-(L-cysteinylamino)-2-deoxy-alpha-D-glucopyranoside + AMP + diphosphate + H(+). In terms of biological role, catalyzes the ATP-dependent condensation of GlcN-Ins and L-cysteine to form L-Cys-GlcN-Ins. The sequence is that of L-cysteine:1D-myo-inositol 2-amino-2-deoxy-alpha-D-glucopyranoside ligase from Arthrobacter sp. (strain FB24).